A 477-amino-acid polypeptide reads, in one-letter code: Putative 4-(hydroxymethyl)benzenesulfonate dehydrogenase TsaD2 (477 aa).

NAD(+)-binding positions include 154–155 (WN), 178–181 (KAAE), and 230–231 (GS). Glu-252 acts as the Proton acceptor in catalysis. Residue Leu-253 coordinates NAD(+). The active-site Nucleophile is the Cys-286. Glu-381 contacts NAD(+).

The protein belongs to the aldehyde dehydrogenase family. In terms of assembly, homodimer.

It catalyses the reaction 4-(hydroxymethyl)benzenesulfonate + NAD(+) = 4-formylbenzenesulfonate + NADH + H(+). Functionally, involved in the toluene-4-sulfonate degradation pathway. Does not discriminate between the sulfonate and the carboxyl substituents and can also be involved in the p-toluenecarboxylate degradation pathway. The chain is Putative 4-(hydroxymethyl)benzenesulfonate dehydrogenase TsaD2 (tsaD2) from Comamonas testosteroni (Pseudomonas testosteroni).